Reading from the N-terminus, the 98-residue chain is NADH-ubiquinone oxidoreductase chain 4L (98 aa).

3 consecutive transmembrane segments (helical) span residues 1–21 (MTPV…GLAF), 29–49 (ALLC…LWAL), and 58–78 (VAPM…LALL).

Belongs to the complex I subunit 4L family.

Its subcellular location is the mitochondrion membrane. The enzyme catalyses a ubiquinone + NADH + 5 H(+)(in) = a ubiquinol + NAD(+) + 4 H(+)(out). Core subunit of the mitochondrial membrane respiratory chain NADH dehydrogenase (Complex I) which catalyzes electron transfer from NADH through the respiratory chain, using ubiquinone as an electron acceptor. Part of the enzyme membrane arm which is embedded in the lipid bilayer and involved in proton translocation. This chain is NADH-ubiquinone oxidoreductase chain 4L (MT-ND4L), found in Salmo salar (Atlantic salmon).